A 200-amino-acid chain; its full sequence is MSKCAGIVLAGGMSSRFGEPKALVGWKESTFIEHIVKVMESAVQEIVVISHTDIKERVEQLVQVPVIEDMSHYKGNGPLAGIVSGMEYIDSDWYIIMPCDAPNVSNEWITILLEQTSNEYDAVVPIINGRKQPLLAAYHNRVKEKIYALLQEEKRSMGQLLSQCNVKYIAGEDVQANVDWFINVNTKEEYVQAQKDLSNE.

Residues 9–11 (LAG), lysine 21, aspartate 69, and aspartate 100 each bind GTP. Mg(2+) is bound at residue aspartate 100.

Belongs to the MobA family. Mg(2+) is required as a cofactor.

The protein localises to the cytoplasm. It carries out the reaction Mo-molybdopterin + GTP + H(+) = Mo-molybdopterin guanine dinucleotide + diphosphate. Transfers a GMP moiety from GTP to Mo-molybdopterin (Mo-MPT) cofactor (Moco or molybdenum cofactor) to form Mo-molybdopterin guanine dinucleotide (Mo-MGD) cofactor. This is Probable molybdenum cofactor guanylyltransferase from Bacillus mycoides (strain KBAB4) (Bacillus weihenstephanensis).